A 383-amino-acid chain; its full sequence is tRNA (guanine(26)-N(2))-dimethyltransferase (383 aa).

The Trm1 methyltransferase domain maps to 4 to 371 (EIITEGRTPL…ASPEEFEAVL (368 aa)). S-adenosyl-L-methionine-binding residues include R38, R63, D80, D108, and A109. The Zn(2+) site is built by C243, C246, C258, and C261.

This sequence belongs to the class I-like SAM-binding methyltransferase superfamily. Trm1 family.

The catalysed reaction is guanosine(26) in tRNA + 2 S-adenosyl-L-methionine = N(2)-dimethylguanosine(26) in tRNA + 2 S-adenosyl-L-homocysteine + 2 H(+). Dimethylates a single guanine residue at position 26 of a number of tRNAs using S-adenosyl-L-methionine as donor of the methyl groups. This is tRNA (guanine(26)-N(2))-dimethyltransferase from Methanopyrus kandleri (strain AV19 / DSM 6324 / JCM 9639 / NBRC 100938).